Reading from the N-terminus, the 378-residue chain is Polygalacturonase (378 aa).

A signal peptide spans 1–20 (MILTRSVVLGFLGSASLALA). C39 and C57 are disulfide-bonded. 5 PbH1 repeats span residues 172–203 (SSGL…DIGD), 204–225 (SDSI…AINS), 226–246 (GTNI…SIGS), 255–276 (VETV…RVKA), and 284–306 (IKGV…TIRQ). The active-site Proton donor is the D218. Residues C220 and C236 are joined by a disulfide bond. Residue H240 is part of the active site. Intrachain disulfides connect C346–C352 and C370–C378.

The protein belongs to the glycosyl hydrolase 28 family.

The protein resides in the secreted. The enzyme catalyses (1,4-alpha-D-galacturonosyl)n+m + H2O = (1,4-alpha-D-galacturonosyl)n + (1,4-alpha-D-galacturonosyl)m.. In Penicillium expansum (Blue mold rot fungus), this protein is Polygalacturonase (PEPG1).